The sequence spans 190 residues: Glutathione peroxidase 2 (190 aa).

The active site involves selenocysteine 40. Position 40 (selenocysteine 40) is a non-standard amino acid, selenocysteine.

This sequence belongs to the glutathione peroxidase family. As to quaternary structure, homotetramer. In terms of tissue distribution, mostly in liver and gastrointestinal tract, not found in heart or kidney.

The protein resides in the cytoplasm. It is found in the cytosol. The enzyme catalyses 2 glutathione + H2O2 = glutathione disulfide + 2 H2O. It carries out the reaction a hydroperoxy polyunsaturated fatty acid + 2 glutathione = a hydroxy polyunsaturated fatty acid + glutathione disulfide + H2O. The catalysed reaction is tert-butyl hydroperoxide + 2 glutathione = tert-butanol + glutathione disulfide + H2O. It catalyses the reaction cumene hydroperoxide + 2 glutathione = 2-phenylpropan-2-ol + glutathione disulfide + H2O. The enzyme catalyses (13S)-hydroperoxy-(9Z,11E)-octadecadienoate + 2 glutathione = (13S)-hydroxy-(9Z,11E)-octadecadienoate + glutathione disulfide + H2O. It carries out the reaction (5S)-hydroperoxy-(6E,8Z,11Z,14Z)-eicosatetraenoate + 2 glutathione = (5S)-hydroxy-(6E,8Z,11Z,14Z)-eicosatetraenoate + glutathione disulfide + H2O. The catalysed reaction is (12R)-hydroperoxy-(5Z,8Z,10E,14Z)-eicosatetraenoate + 2 glutathione = (12R)-hydroxy-(5Z,8Z,10E,14Z)-eicosatetraenoate + glutathione disulfide + H2O. It catalyses the reaction (15S)-hydroperoxy-(5Z,8Z,11Z,13E)-eicosatetraenoate + 2 glutathione = (15S)-hydroxy-(5Z,8Z,11Z,13E)-eicosatetraenoate + glutathione disulfide + H2O. Its function is as follows. Catalyzes the reduction of hydroperoxides in a glutathione-dependent manner thus regulating cellular redox homeostasis. Can reduce small soluble hydroperoxides such as H2O2, cumene hydroperoxide and tert-butyl hydroperoxide, as well as several fatty acid-derived hydroperoxides. Cannot reduce phosphatidycholine hydroperoxide. In Homo sapiens (Human), this protein is Glutathione peroxidase 2.